A 340-amino-acid polypeptide reads, in one-letter code: MLNEELLPIWLDHDCGHDDAFAMLLAFHSKIFNILGISSVHGNQTVDKTTINALITLEIIGKSNCGYEVVKGVRSPMCRPEQVCSEIHGETGLDCPTAELPKPTQLPITDRPAIQVMFEKISKFYTDNQQKQKVIIVATGSLTNVALLFAVYPQIKPMVEVSLLGGSINFGNISPAAEYNILVDPEAAKVVFESGVKVIMVPLECSHKALVNEKILERISDIEKADGKQTQFIKIIKGLLLFFADNYKSTFDFDHPPLHDPLAVAYLIDPTIFKCKLMRVDIETSSHLCLGRTVVDLFSMSKLQKNVHVCTDINVDKFWDLMINAIDNCYNHLYKSNILK.

Residue aspartate 14 participates in Ca(2+) binding. Residue aspartate 18 coordinates substrate. The Ca(2+) site is built by aspartate 19 and threonine 139. The substrate site is built by asparagine 172, glutamate 178, and asparagine 180. The active-site Proton donor is the histidine 259. A Ca(2+)-binding site is contributed by aspartate 260.

This sequence belongs to the IUNH family. Requires Ca(2+) as cofactor.

The catalysed reaction is a purine D-ribonucleoside + H2O = a purine nucleobase + D-ribose. It catalyses the reaction a pyrimidine ribonucleoside + H2O = a pyrimidine nucleobase + D-ribose. The protein operates within purine metabolism; purine nucleoside salvage. In terms of biological role, catalyzes the hydrolysis of the N-glycosidic bond of purine and/or pyrimidine nucleosides into ribose and the base. The protein is Probable ribonucleoside hydrolase (iunH) of Dictyostelium discoideum (Social amoeba).